The sequence spans 336 residues: P2Y purinoceptor 13 (336 aa).

Residues 1 to 32 (MLGTVNTTGMQGFNKSERCPRDTRMTQLLFPV) are Extracellular-facing. Residues Asn6 and Asn14 are each glycosylated (N-linked (GlcNAc...) asparagine). A helical transmembrane segment spans residues 33–53 (LYTVVFFTGVLLNTLALWVFI). Residues 54 to 60 (HIPSNST) lie on the Cytoplasmic side of the membrane. The helical transmembrane segment at 61–81 (FIIYLKNTLVADLIMTLMLPF) threads the bilayer. Over 82–100 (KILSDSRLAPWQLRGFVCT) the chain is Extracellular. A disulfide bond links Cys99 and Cys176. A helical transmembrane segment spans residues 101 to 121 (FSSVVFYETMYVGIMMLGLIA). The Cytoplasmic segment spans residues 122 to 144 (FDRFLKIVVPFRKTFVKKTAFAK). Residues 145–165 (IVSISIWLLMFLISLPNMILN) form a helical membrane-spanning segment. The Extracellular segment spans residues 166–193 (KEATASTVKKCASLKSPLGLLWHQVVSH). The chain crosses the membrane as a helical span at residues 194 to 214 (TCQFIFWTVFILMLLFYTVIA). The Cytoplasmic segment spans residues 215 to 237 (KKVYDSYRKFKSRDSKHKRLEAK). Residues 238–258 (VFIVMAVFFVCFAPFHFVRVP) traverse the membrane as a helical segment. Residues 259 to 281 (YTHSQTTNKTDCRLENQLFLAKE) lie on the Extracellular side of the membrane. N-linked (GlcNAc...) asparagine glycosylation is present at Asn266. The chain crosses the membrane as a helical span at residues 282–302 (STLFLATTNICMDPLIYIILC). At 303 to 336 (KKFTRKVPCMRWRTKTAASSDEHHSSQTDNITLS) the chain is on the cytoplasmic side.

This sequence belongs to the G-protein coupled receptor 1 family. As to expression, highest levels in spleen, liver brain and kidney. Lower but significant level are also detected in intestine, stomach, skeletal muscle, testis, heart and lung.

The protein resides in the cell membrane. In terms of biological role, receptor for ADP. Coupled to G(i)-proteins. May play a role in hematopoiesis and the immune system. The polypeptide is P2Y purinoceptor 13 (P2ry13) (Rattus norvegicus (Rat)).